The following is a 553-amino-acid chain: Transcription factor MYB65 (553 aa).

Residues 1–44 are disordered; sequence MSYTTATADSDDGMHSSIHNESPAPDSISNGCRSRGKRSVLKKG. HTH myb-type domains lie at 38 to 90 and 91 to 145; these read RSVL…ANHL and RPNL…KRRQ. 2 consecutive DNA-binding regions (H-T-H motif) follow at residues 66 to 90 and 118 to 141; these read WNAV…ANHL and WAQM…NTRI.

In terms of tissue distribution, mostly expressed in roots (e.g. root tips), stems, pollen, shoot apices, flowers and floral shoot tips, and, to a lower extent, in leaves and siliques.

It localises to the nucleus. Its function is as follows. Transcriptional activator of alpha-amylase expression that binds to 5'-CAACTGTC-3' motif in target gene promoter. In vegetative tissues, inhibits growth by reducing cell proliferation. Promotes the expression of aleurone-related genes (e.g. CP1, CP, GASA1, BXL1 and BXL2) in seeds. Together with MYB33 and MYB101, promotes the programmed cell death (PCD) the vacuolation of protein storage vacuoles (PSVs) in the aleurone layers during seed germination. Together with MYB33, facilitates anther and tapetum development. The chain is Transcription factor MYB65 from Arabidopsis thaliana (Mouse-ear cress).